The primary structure comprises 240 residues: Ribosomal RNA small subunit methyltransferase G (240 aa).

S-adenosyl-L-methionine contacts are provided by residues G79, 130-131 (AE), and R149.

It belongs to the methyltransferase superfamily. RNA methyltransferase RsmG family.

It is found in the cytoplasm. Functionally, specifically methylates the N7 position of a guanine in 16S rRNA. The protein is Ribosomal RNA small subunit methyltransferase G of Moorella thermoacetica (strain ATCC 39073 / JCM 9320).